Here is a 349-residue protein sequence, read N- to C-terminus: 5-deoxyribose 1-phosphate isomerase (349 aa).

Residues 49–51, arginine 92, and glutamine 199 contribute to the substrate site; that span reads RGA. The Proton donor role is filled by aspartate 240. Residue 250–251 coordinates substrate; sequence NK.

This sequence belongs to the EIF-2B alpha/beta/delta subunits family. DrdI subfamily.

The enzyme catalyses 5-deoxy-alpha-D-ribose 1-phosphate = 5-deoxy-D-ribulose 1-phosphate. It participates in carbohydrate degradation. Catalyzes the isomerization of 5-deoxy-alpha-D-ribose 1-phosphate to 5-deoxy-D-ribulose 1-phosphate, as part of a 5-deoxyribose salvage pathway that recycles this toxic radical SAM enzyme by-product to mainstream metabolites. The protein is 5-deoxyribose 1-phosphate isomerase of Clostridium botulinum (strain ATCC 19397 / Type A).